The primary structure comprises 77 residues: Large ribosomal subunit protein bL28 (77 aa).

The segment at M1–T25 is disordered.

This sequence belongs to the bacterial ribosomal protein bL28 family.

This is Large ribosomal subunit protein bL28 from Paraburkholderia xenovorans (strain LB400).